We begin with the raw amino-acid sequence, 617 residues long: Transmembrane protein 232 (617 aa).

A helical transmembrane segment spans residues 129–149 (LVKIGYLIFLRLFVFFLHGHL). Residues 567-604 (LKQIEAVCEAQNRKDEEEKEKIRFQEIMKQRERKLNKQ) adopt a coiled-coil conformation. Residues 598-617 (ERKLNKQTKPYEITPSEKKE) form a disordered region.

Its subcellular location is the membrane. Functionally, plays a critical role for male fertility and sperm motility by regulating sperm cytoplasm removal and maintaining axoneme integrity. This chain is Transmembrane protein 232 (Tmem232), found in Rattus norvegicus (Rat).